Here is a 398-residue protein sequence, read N- to C-terminus: Succinate--CoA ligase [ADP-forming] subunit beta (398 aa).

Residues 9 to 254 enclose the ATP-grasp domain; that stretch reads KRLLHEYGAP…LSEEDPKEIE (246 aa). Residues Lys-46, 53–55, Glu-109, Ala-112, and Glu-117 each bind ATP; that span reads GRG. Mg(2+) is bound by residues Asn-209 and Asp-223. Substrate is bound by residues Asn-274 and 331-333; that span reads GIM.

Belongs to the succinate/malate CoA ligase beta subunit family. Heterotetramer of two alpha and two beta subunits. The cofactor is Mg(2+).

The catalysed reaction is succinate + ATP + CoA = succinyl-CoA + ADP + phosphate. The enzyme catalyses GTP + succinate + CoA = succinyl-CoA + GDP + phosphate. Its pathway is carbohydrate metabolism; tricarboxylic acid cycle; succinate from succinyl-CoA (ligase route): step 1/1. In terms of biological role, succinyl-CoA synthetase functions in the citric acid cycle (TCA), coupling the hydrolysis of succinyl-CoA to the synthesis of either ATP or GTP and thus represents the only step of substrate-level phosphorylation in the TCA. The beta subunit provides nucleotide specificity of the enzyme and binds the substrate succinate, while the binding sites for coenzyme A and phosphate are found in the alpha subunit. The protein is Succinate--CoA ligase [ADP-forming] subunit beta of Bartonella quintana (strain Toulouse) (Rochalimaea quintana).